Here is a 152-residue protein sequence, read N- to C-terminus: Large ribosomal subunit protein bL34c (152 aa).

A chloroplast-targeting transit peptide spans 1 to 91; the sequence is MATLSLLSTG…DRCRRFVVRA (91 aa).

Component of the chloroplast large ribosomal subunit (LSU). Mature 70S chloroplast ribosomes of higher plants consist of a small (30S) and a large (50S) subunit. The 30S small subunit contains 1 molecule of ribosomal RNA (16S rRNA) and 24 different proteins. The 50S large subunit contains 3 rRNA molecules (23S, 5S and 4.5S rRNA) and 33 different proteins.

The protein resides in the plastid. It is found in the chloroplast. Functionally, component of the chloroplast ribosome (chloro-ribosome), a dedicated translation machinery responsible for the synthesis of chloroplast genome-encoded proteins, including proteins of the transcription and translation machinery and components of the photosynthetic apparatus. This chain is Large ribosomal subunit protein bL34c (RPL34), found in Spinacia oleracea (Spinach).